A 1010-amino-acid chain; its full sequence is Retinoblastoma-related protein 1 (1010 aa).

Positions 1-23 (MEGAAPPASSGSEVTGAGSGKVD) are disordered. The segment at 419–619 (TPVSTAMTTA…EKGSSMYNSL (201 aa)) is domain A. Positions 419 to 861 (TPVSTAMTTA…NEVFIPTVKP (443 aa)) are pocket. The tract at residues 620–730 (IVARPTLSAE…PAAGGELCAE (111 aa)) is spacer. A disordered region spans residues 657–679 (LPPLPFQKQEHSPDKDEVRSPKR). The span at 664-679 (KQEHSPDKDEVRSPKR) shows a compositional bias: basic and acidic residues. The segment at 731–861 (TGIGVFLSKI…NEVFIPTVKP (131 aa)) is domain B. A disordered region spans residues 868–898 (SGTSPNKKNEEKCAADGPYPESPRLSRFPNL).

This sequence belongs to the retinoblastoma protein (RB) family.

It localises to the nucleus. In terms of biological role, regulator of biological processes that recruits a histone deacetylase to control gene transcription. May play a role in the entry into mitosis, negatively regulating the cell proliferation. Formation of stable complexes with geminiviridae replication-associated proteins may create a cellular environment which favors viral DNA replication. This Oryza sativa subsp. indica (Rice) protein is Retinoblastoma-related protein 1 (RBR1).